The following is a 247-amino-acid chain: Adenosylcobinamide-GDP ribazoletransferase (247 aa).

5 helical membrane-spanning segments follow: residues 34–54, 57–77, 113–133, 138–158, and 194–214; these read IITF…VFMV, AWCG…LMTG, GGLA…ELAL, ILAS…LLMY, and VLLL…AIFI.

Belongs to the CobS family. It depends on Mg(2+) as a cofactor.

The protein resides in the cell inner membrane. The catalysed reaction is alpha-ribazole + adenosylcob(III)inamide-GDP = adenosylcob(III)alamin + GMP + H(+). The enzyme catalyses alpha-ribazole 5'-phosphate + adenosylcob(III)inamide-GDP = adenosylcob(III)alamin 5'-phosphate + GMP + H(+). The protein operates within cofactor biosynthesis; adenosylcobalamin biosynthesis; adenosylcobalamin from cob(II)yrinate a,c-diamide: step 7/7. Joins adenosylcobinamide-GDP and alpha-ribazole to generate adenosylcobalamin (Ado-cobalamin). Also synthesizes adenosylcobalamin 5'-phosphate from adenosylcobinamide-GDP and alpha-ribazole 5'-phosphate. This is Adenosylcobinamide-GDP ribazoletransferase from Shigella flexneri serotype 5b (strain 8401).